The primary structure comprises 377 residues: Nitric oxide reductase FlRd-NAD(+) reductase (377 aa).

This sequence belongs to the FAD-dependent oxidoreductase family. FAD serves as cofactor.

It is found in the cytoplasm. The catalysed reaction is 2 reduced [nitric oxide reductase rubredoxin domain] + NAD(+) + H(+) = 2 oxidized [nitric oxide reductase rubredoxin domain] + NADH. It functions in the pathway nitrogen metabolism; nitric oxide reduction. One of at least two accessory proteins for anaerobic nitric oxide (NO) reductase. Reduces the rubredoxin moiety of NO reductase. The protein is Nitric oxide reductase FlRd-NAD(+) reductase (norW) of Shigella boydii serotype 4 (strain Sb227).